Consider the following 194-residue polypeptide: CASP-like protein 2C2 (194 aa).

The Cytoplasmic portion of the chain corresponds to 1–27 (MAAGQPRPPPPPSSVRTERVLRAACAA). A helical membrane pass occupies residues 28–48 (MAAAGALLLGFSAETKTVIFV). At 49–58 (QKKAVPKDVQ) the chain is on the extracellular side. The helical transmembrane segment at 59–79 (ALWVLIVAAAAAAAYHAAQLA) threads the bilayer. Residues 80-113 (RCLCMDRLAGGGGGCRRLRRAVACATFLLDKGCA) lie on the Cytoplasmic side of the membrane. A helical transmembrane segment spans residues 114–134 (YMVLATTVAALQACFVGLLGV). The Extracellular segment spans residues 135-152 (EALQWSKLCNIYTRFCEQ). A helical membrane pass occupies residues 153 to 173 (AAAGMVCSLVAAAGMAVLSAF). Residues 174 to 194 (SARDLFRRRRPCSPCVQVQQV) lie on the Cytoplasmic side of the membrane.

The protein belongs to the Casparian strip membrane proteins (CASP) family. As to quaternary structure, homodimer and heterodimers.

It localises to the cell membrane. The sequence is that of CASP-like protein 2C2 from Sorghum bicolor (Sorghum).